The chain runs to 448 residues: N-succinylarginine dihydrolase (448 aa).

Residues 19–28 (GGLSYGNVAS), Asn110, and 137–138 (HR) each bind substrate. Glu174 is an active-site residue. Arg214 contributes to the substrate binding site. The active site involves His250. Residues Asp252 and Asn365 each contribute to the substrate site. Residue Cys371 is the Nucleophile of the active site.

It belongs to the succinylarginine dihydrolase family. Homodimer.

It carries out the reaction N(2)-succinyl-L-arginine + 2 H2O + 2 H(+) = N(2)-succinyl-L-ornithine + 2 NH4(+) + CO2. The protein operates within amino-acid degradation; L-arginine degradation via AST pathway; L-glutamate and succinate from L-arginine: step 2/5. In terms of biological role, catalyzes the hydrolysis of N(2)-succinylarginine into N(2)-succinylornithine, ammonia and CO(2). This Pseudomonas savastanoi pv. phaseolicola (strain 1448A / Race 6) (Pseudomonas syringae pv. phaseolicola (strain 1448A / Race 6)) protein is N-succinylarginine dihydrolase.